Consider the following 374-residue polypeptide: Alpha-N-acetylgalactosaminide alpha-2,6-sialyltransferase 2 (374 aa).

At 1-7 (MGLPRGS) the chain is on the cytoplasmic side. Residues 8–28 (FFWLLLLLTAACSGLLFALYF) traverse the membrane as a helical; Signal-anchor for type II membrane protein segment. Residues 29–374 (SAVQRYPGPA…KAGILQLYQR (346 aa)) lie on the Lumenal side of the membrane. 2 disulfides stabilise this stretch: Cys66-Cys148 and Cys151-Cys317. Asn85 and Asn130 each carry an N-linked (GlcNAc...) asparagine glycan. Asn156 serves as a coordination point for CMP-N-acetyl-beta-neuraminate. N-linked (GlcNAc...) asparagine glycosylation is present at Asn161. Residues Asn179, Ser304, and His336 each contribute to the CMP-N-acetyl-beta-neuraminate site.

The protein belongs to the glycosyltransferase 29 family. As to expression, expressed in skeletal muscle, heart, kidney, placenta, lung and leukocytes.

The protein localises to the golgi apparatus membrane. The catalysed reaction is a beta-D-galactosyl-(1-&gt;3)-N-acetyl-alpha-D-galactosaminyl derivative + CMP-N-acetyl-beta-neuraminate = a beta-D-galactosyl-(1-&gt;3)-[N-acetyl-alpha-neuraminyl-(2-&gt;6)]-N-acetyl-alpha-D-galactosaminyl derivative + CMP + H(+). It carries out the reaction a 3-O-[N-acetyl-alpha-D-galactosaminyl]-L-threonyl-[protein] + CMP-N-acetyl-beta-neuraminate = a 3-O-[N-acetyl-alpha-neuraminosyl-(2-&gt;6)-N-acetyl-alpha-D-galactosaminyl]-L-threonyl-[protein] + CMP + H(+). The enzyme catalyses a 3-O-[N-acetyl-alpha-neuraminyl-(2-&gt;3)-beta-D-galactosyl-(1-&gt;3)-N-acetyl-alpha-D-galactosaminyl]-L-threonyl-[protein] + CMP-N-acetyl-beta-neuraminate = a 3-O-{alpha-Neu5Ac-(2-&gt;3)-beta-D-Gal-(1-&gt;3)-[alpha-Neu5Ac-(2-&gt;6)]-alpha-D-GalNAc}-L-threonyl-[protein] + CMP + H(+). It participates in protein modification; protein glycosylation. Functionally, catalyzes the transfer of N-acetylneuraminyl groups onto glycan chains in glycoproteins. Conjugates sialic acid with an alpha-2-6 linkage to N-acetylgalactosamine (GalNAc) glycan chains linked to serine or threonine in glycoproteins. Sialylates alphaGalNAc- and Galbeta1-&gt;3GalNAc-O-Ser/Thr epitopes also known as Tn and T antigens. The polypeptide is Alpha-N-acetylgalactosaminide alpha-2,6-sialyltransferase 2 (ST6GALNAC2) (Homo sapiens (Human)).